The following is a 345-amino-acid chain: Anthranilate phosphoribosyltransferase (345 aa).

5-phospho-alpha-D-ribose 1-diphosphate-binding positions include Gly-80, 83–84, Thr-88, 90–93, 108–116, and Ser-120; these read GD, NIST, and KHGNRSVSS. Gly-80 contacts anthranilate. Residue Ser-92 participates in Mg(2+) binding. Asn-111 contacts anthranilate. Arg-166 provides a ligand contact to anthranilate. Mg(2+) contacts are provided by Asp-225 and Glu-226.

This sequence belongs to the anthranilate phosphoribosyltransferase family. As to quaternary structure, homodimer. The cofactor is Mg(2+).

The enzyme catalyses N-(5-phospho-beta-D-ribosyl)anthranilate + diphosphate = 5-phospho-alpha-D-ribose 1-diphosphate + anthranilate. It functions in the pathway amino-acid biosynthesis; L-tryptophan biosynthesis; L-tryptophan from chorismate: step 2/5. Catalyzes the transfer of the phosphoribosyl group of 5-phosphorylribose-1-pyrophosphate (PRPP) to anthranilate to yield N-(5'-phosphoribosyl)-anthranilate (PRA). The sequence is that of Anthranilate phosphoribosyltransferase from Desulforamulus reducens (strain ATCC BAA-1160 / DSM 100696 / MI-1) (Desulfotomaculum reducens).